Reading from the N-terminus, the 59-residue chain is UPF0181 protein YoaH (59 aa).

This sequence belongs to the UPF0181 family.

The polypeptide is UPF0181 protein YoaH (Shigella sonnei (strain Ss046)).